Here is a 389-residue protein sequence, read N- to C-terminus: Succinate--CoA ligase [ADP-forming] subunit beta (389 aa).

Positions 9 to 244 (KQILRKYGIP…PSQMSNNEAR (236 aa)) constitute an ATP-grasp domain. Residues K46, 53 to 55 (GRG), I102, and E107 contribute to the ATP site. N199 and D213 together coordinate Mg(2+). Substrate-binding positions include N264 and 321 to 323 (GIM).

The protein belongs to the succinate/malate CoA ligase beta subunit family. As to quaternary structure, heterotetramer of two alpha and two beta subunits. Requires Mg(2+) as cofactor.

The catalysed reaction is succinate + ATP + CoA = succinyl-CoA + ADP + phosphate. It carries out the reaction GTP + succinate + CoA = succinyl-CoA + GDP + phosphate. It functions in the pathway carbohydrate metabolism; tricarboxylic acid cycle; succinate from succinyl-CoA (ligase route): step 1/1. Succinyl-CoA synthetase functions in the citric acid cycle (TCA), coupling the hydrolysis of succinyl-CoA to the synthesis of either ATP or GTP and thus represents the only step of substrate-level phosphorylation in the TCA. The beta subunit provides nucleotide specificity of the enzyme and binds the substrate succinate, while the binding sites for coenzyme A and phosphate are found in the alpha subunit. This chain is Succinate--CoA ligase [ADP-forming] subunit beta, found in Protochlamydia amoebophila (strain UWE25).